A 251-amino-acid chain; its full sequence is 5'-nucleotidase SurE (251 aa).

A divalent metal cation contacts are provided by aspartate 8, aspartate 9, serine 39, and asparagine 91.

This sequence belongs to the SurE nucleotidase family. A divalent metal cation serves as cofactor.

It localises to the cytoplasm. It catalyses the reaction a ribonucleoside 5'-phosphate + H2O = a ribonucleoside + phosphate. Nucleotidase that shows phosphatase activity on nucleoside 5'-monophosphates. This Thioalkalivibrio sulfidiphilus (strain HL-EbGR7) protein is 5'-nucleotidase SurE.